Consider the following 189-residue polypeptide: Large ribosomal subunit protein bL17 (189 aa).

A disordered region spans residues D126–N189. Low complexity predominate over residues Q139 to D180.

This sequence belongs to the bacterial ribosomal protein bL17 family. In terms of assembly, part of the 50S ribosomal subunit. Contacts protein L32.

The polypeptide is Large ribosomal subunit protein bL17 (Mycobacterium marinum (strain ATCC BAA-535 / M)).